A 439-amino-acid polypeptide reads, in one-letter code: Xylose isomerase (439 aa).

Active-site residues include histidine 101 and aspartate 104. Residues glutamate 232, glutamate 268, histidine 271, aspartate 296, aspartate 307, aspartate 309, and aspartate 339 each coordinate Mg(2+).

The protein belongs to the xylose isomerase family. In terms of assembly, homotetramer. The cofactor is Mg(2+).

It is found in the cytoplasm. It carries out the reaction alpha-D-xylose = alpha-D-xylulofuranose. This chain is Xylose isomerase, found in Photobacterium profundum (strain SS9).